The sequence spans 207 residues: MKFDLTTAYTLSIPLLASSGTVLATTADTSSKSSTMTAIHTSTGYNNHSDSLWATFNNNVALTWDAPNNEFYLPVITWHNRYTYDKEKTDKYNERPWGFGYGKYRYDKDNDWHSLYAMAFMDSHNRLEPIIGYGFQKMWIPGDLDGFRLGVGFTLSVTARHDYYYVPIPLPLPLFSVEYDQLSFQGTYIPGTYNNGNVFFAWLRWQW.

Residues 1–24 (MKFDLTTAYTLSIPLLASSGTVLA) form the signal peptide. Residues histidine 79, aspartate 122, and serine 123 contribute to the active site.

It belongs to the lipid A palmitoyltransferase family. Homodimer.

It localises to the cell outer membrane. It carries out the reaction a lipid A + a 1,2-diacyl-sn-glycero-3-phosphocholine = a hepta-acyl lipid A + a 2-acyl-sn-glycero-3-phosphocholine. The catalysed reaction is a lipid IVA + a 1,2-diacyl-sn-glycero-3-phosphocholine = a lipid IVB + a 2-acyl-sn-glycero-3-phosphocholine. The enzyme catalyses a lipid IIA + a 1,2-diacyl-sn-glycero-3-phosphocholine = a lipid IIB + a 2-acyl-sn-glycero-3-phosphocholine. Transfers a fatty acid residue from the sn-1 position of a phospholipid to the N-linked hydroxyfatty acid chain on the proximal unit of lipid A or its precursors. The protein is Lipid A acyltransferase PagP of Photorhabdus asymbiotica subsp. asymbiotica (strain ATCC 43949 / 3105-77) (Xenorhabdus luminescens (strain 2)).